Reading from the N-terminus, the 472-residue chain is UDP-N-acetylmuramate--L-alanine ligase (472 aa).

Residue glycine 118–threonine 124 participates in ATP binding.

The protein belongs to the MurCDEF family.

It localises to the cytoplasm. It carries out the reaction UDP-N-acetyl-alpha-D-muramate + L-alanine + ATP = UDP-N-acetyl-alpha-D-muramoyl-L-alanine + ADP + phosphate + H(+). The protein operates within cell wall biogenesis; peptidoglycan biosynthesis. Functionally, cell wall formation. The polypeptide is UDP-N-acetylmuramate--L-alanine ligase (Methylococcus capsulatus (strain ATCC 33009 / NCIMB 11132 / Bath)).